A 441-amino-acid polypeptide reads, in one-letter code: Deoxyguanosinetriphosphate triphosphohydrolase-like protein 1 (441 aa).

Residues R62–G255 enclose the HD domain.

The protein belongs to the dGTPase family. Type 2 subfamily.

In Vibrio cholerae serotype O1 (strain ATCC 39315 / El Tor Inaba N16961), this protein is Deoxyguanosinetriphosphate triphosphohydrolase-like protein 1.